Reading from the N-terminus, the 427-residue chain is MTVETSQTPSAAIDSDRWPAVAKVPRGPLAAASAAIANRLLRRTATHLPLRLVYSDGTATGAADPRAPSLFIHRPDALARRIGRHGLIGFGESYMAGEWSSKELTRVLTVLAGSVDELVPRSLHWLRPITPTFRPSWPDHSRDQARRNIAVHYDLSNDLFAAFLDETMTYSCAMFTDLLAQPTPAWTELAAAQRRKIDRLLDVAGVQQGSHVLEIGTGWGELCIRAAARGAHIRSVTLSVEQQRLARQRVAAAGFGHRVEIDLCDYRDVDGQYDSVVSVEMIEAVGYRSWPRYFAALEQLVRPGGPVAIQAITMPHHRMLATRHTQTWIQKYIFPGGLLPSTQAIIDITGQHTGLRIVDAASLRPHYAETLRLWRERFMQRRDGLAHLGFDEVFARMWELYLAYSEAGFRSGYLDVYQWTLIREGPP.

This sequence belongs to the CFA/CMAS family.

The protein operates within lipid metabolism; fatty acid biosynthesis. Its activity is regulated as follows. Inhibited by S-adenosyl-L-homocysteine. Functionally, involved in the biosynthesis of the tuberculostearic acid (10-methylstearic-acid or TSA), a constituent lipid of the mycobacterial cell wall. Catalyzes the transfer of the methyl group from S-adenosyl-L-methionine (SAM) to the double bond of oleic acid in phosphatidylethanolamine or phosphatidylcholine to produce TSA. The polypeptide is Tuberculostearic acid methyltransferase UfaA1 (Mycobacterium tuberculosis (strain ATCC 25618 / H37Rv)).